Reading from the N-terminus, the 118-residue chain is Probable non-functional immunoglobulin lambda variable 1-50 (118 aa).

The first 19 residues, 1–19, serve as a signal peptide directing secretion; that stretch reads MAWSSLLLTLLAHCTGSWA. The interval 20–44 is framework-1; the sequence is QSVLTQPPSVSGAPGQRVTISCTGS. Residues 20–118 enclose the Ig-like domain; the sequence is QSVLTQPPSV…CKAWDNSLNA (99 aa). Cysteine 41 and cysteine 109 form a disulfide bridge. Positions 45–53 are complementarity-determining-1; it reads SSNIGAGYV. The interval 54-70 is framework-2; sequence VHWYQQLPGTAPKLLIY. The complementarity-determining-2 stretch occupies residues 71–73; that stretch reads GNS. The interval 74 to 109 is framework-3; the sequence is NRPSGVPDQFSGSKSGTSASLAITGLQSEDEADYYC. Residues 110–118 are complementarity-determining-3; sequence KAWDNSLNA.

Immunoglobulins are composed of two identical heavy chains and two identical light chains; disulfide-linked.

The protein resides in the secreted. It localises to the cell membrane. Functionally, probable non-functional open reading frame (ORF) of V region of the variable domain of immunoglobulin light chains. Non-functional ORF generally cannot participate in the synthesis of a productive immunoglobulin chain due to altered V-(D)-J or switch recombination and/or splicing site (at mRNA level) and/or conserved amino acid change (protein level). Immunoglobulins, also known as antibodies, are membrane-bound or secreted glycoproteins produced by B lymphocytes. In the recognition phase of humoral immunity, the membrane-bound immunoglobulins serve as receptors which, upon binding of a specific antigen, trigger the clonal expansion and differentiation of B lymphocytes into immunoglobulins-secreting plasma cells. Secreted immunoglobulins mediate the effector phase of humoral immunity, which results in the elimination of bound antigens. The antigen binding site is formed by the variable domain of one heavy chain, together with that of its associated light chain. Thus, each immunoglobulin has two antigen binding sites with remarkable affinity for a particular antigen. The variable domains are assembled by a process called V-(D)-J rearrangement and can then be subjected to somatic hypermutations which, after exposure to antigen and selection, allow affinity maturation for a particular antigen. The sequence is that of Probable non-functional immunoglobulin lambda variable 1-50 from Homo sapiens (Human).